The primary structure comprises 628 residues: Probable potassium transport system protein Kup (628 aa).

12 consecutive transmembrane segments (helical) span residues 15–35 (LAIAAIGVVFGDIGTSPLYSL), 55–75 (VISLLFWAIVIVVGVKYVLFV), 104–124 (AGLLMMLGIFGACMFYGDAVI), 142–162 (PHLSHLVLPLTIVILILLFWI), 173–193 (LFGPIMVLWFVVLAALGLWHI), 210–230 (TFMAAHVLQAYVVLGSVVLVL), 252–272 (WYVLVMPSLVLNYFGQGALLM), 281–301 (PFFLLAPDWALLPLVVLSTIA), 342–362 (IYVPVVNWMLLFIILCIVIAF), 372–392 (YGIAVTATMVITTILACVVMV), 400–420 (LLVALIIGVFMTVDLGFFGAN), and 426–446 (EGGWLPLGIGALLFFLLMTWY).

The protein belongs to the HAK/KUP transporter (TC 2.A.72) family.

It localises to the cell inner membrane. The catalysed reaction is K(+)(in) + H(+)(in) = K(+)(out) + H(+)(out). Transport of potassium into the cell. Likely operates as a K(+):H(+) symporter. This is Probable potassium transport system protein Kup from Paraburkholderia xenovorans (strain LB400).